The sequence spans 261 residues: Cytosolic Fe-S cluster assembly factor Nubp2 homolog (261 aa).

14 to 21 (GKGGVGKS) lines the ATP pocket. [4Fe-4S] cluster contacts are provided by Cys-188 and Cys-191.

It belongs to the Mrp/NBP35 ATP-binding proteins family. NUBP2/CFD1 subfamily. As to quaternary structure, heterotetramer of 2 Nubp1 and 2 Nubp2 chains. [4Fe-4S] cluster is required as a cofactor.

It localises to the cytoplasm. Component of the cytosolic iron-sulfur (Fe/S) protein assembly (CIA) machinery. Required for maturation of extramitochondrial Fe-S proteins. The Nubp1-Nubp2 heterotetramer forms a Fe-S scaffold complex, mediating the de novo assembly of an Fe-S cluster and its transfer to target apoproteins. The protein is Cytosolic Fe-S cluster assembly factor Nubp2 homolog of Drosophila ananassae (Fruit fly).